The sequence spans 88 residues: Small ribosomal subunit protein uS15 (88 aa).

The segment covering 1–20 has biased composition (polar residues); it reads MLTTQDKQNIIKENQQSEGD. Positions 1-24 are disordered; sequence MLTTQDKQNIIKENQQSEGDTGSP.

Belongs to the universal ribosomal protein uS15 family. Part of the 30S ribosomal subunit. Forms a bridge to the 50S subunit in the 70S ribosome, contacting the 23S rRNA.

Its function is as follows. One of the primary rRNA binding proteins, it binds directly to 16S rRNA where it helps nucleate assembly of the platform of the 30S subunit by binding and bridging several RNA helices of the 16S rRNA. In terms of biological role, forms an intersubunit bridge (bridge B4) with the 23S rRNA of the 50S subunit in the ribosome. The sequence is that of Small ribosomal subunit protein uS15 from Francisella philomiragia subsp. philomiragia (strain ATCC 25017 / CCUG 19701 / FSC 153 / O#319-036).